A 611-amino-acid polypeptide reads, in one-letter code: Cilia- and flagella-associated protein 100 (611 aa).

Positions 1–17 (MSEIPSTIVSKNMTNDK) are enriched in polar residues. The segment at 1-57 (MSEIPSTIVSKNMTNDKNSLESMNISSSSSTEENPKKQARKNEEHGPDPSANPFHLS) is disordered. Low complexity predominate over residues 20–32 (LESMNISSSSSTE). A compositionally biased stretch (basic and acidic residues) spans 33 to 47 (ENPKKQARKNEEHGP). 3 coiled-coil regions span residues 101–128 (SLRRQLQLEDKQEDLEARAEAEHQRAFR), 164–203 (ALDVKRREIQRLETLATKEEARLERAEKSLEKDAALFDEF), and 230–257 (LEIRDLTTQIVNIKSEISRFEDTLKHYK). 2 disordered regions span residues 287–323 (EVSEASKESSVNSTPGDKGPGIKGKASSMWAKEGQGT) and 338–380 (SPSY…GEEP). Low complexity predominate over residues 338–357 (SPSYLSSPQQGSQPSESSGG). 2 coiled-coil regions span residues 393–432 (VFRELEEQNLSLIQNSQETEKTLEELSHTLKHTQIRMDRE) and 526–578 (QVKI…RGRT).

The protein belongs to the CFAP100 family.

The protein resides in the cytoplasm. Its subcellular location is the cytoskeleton. It localises to the cilium axoneme. May play a role in ciliary/flagellar motility by regulating the assembly and the activity of axonemal inner dynein arm. The chain is Cilia- and flagella-associated protein 100 from Homo sapiens (Human).